We begin with the raw amino-acid sequence, 534 residues long: Cytokinin dehydrogenase 5 (534 aa).

Residues 1 to 20 (MAWCLVFMVFLIYCLISTVG) form the signal peptide. Positions 59 to 243 (TSAEPLAVFH…TRARIALEPA (185 aa)) constitute an FAD-binding PCMH-type domain. Ala93, Gly95, and Gly97 together coordinate FAD. Pros-8alpha-FAD histidine is present on His98. The FAD site is built by Ser99 and Gln103. An N-linked (GlcNAc...) asparagine glycan is attached at Asn152. Residues Asp167, Ser172, Ser178, Ile182, and Ile233 each contribute to the FAD site. Asn256 is a glycosylation site (N-linked (GlcNAc...) asparagine). FAD contacts are provided by Tyr484 and Gln522.

Belongs to the oxygen-dependent FAD-linked oxidoreductase family. In terms of assembly, monomer. The cofactor is FAD. As to expression, expressed in inflorescence meristems.

Its subcellular location is the secreted. The protein localises to the extracellular space. The enzyme catalyses N(6)-dimethylallyladenine + A + H2O = 3-methyl-2-butenal + adenine + AH2. Functionally, catalyzes the oxidation of cytokinins, a family of N(6)-substituted adenine derivatives that are plant hormones, where the substituent is an isopentenyl group. This chain is Cytokinin dehydrogenase 5 (CKX5), found in Oryza sativa subsp. japonica (Rice).